A 340-amino-acid polypeptide reads, in one-letter code: Putative phosphatidylcholine:ceramide cholinephosphotransferase 3 (340 aa).

Positions 1-25 are disordered; the sequence is MGSVSKTVISARGASPDDEQNGTKN. The next 4 membrane-spanning stretches (helical) occupy residues 36–56, 81–101, 178–198, and 202–222; these read CIFLFFFLFIAGMSNWAVLAY, SSLGDFCVALCIVMLGALLVI, LLFSGHTLVMVTCSLAVAYYL, and IKPLQWVSHVACLIGMICMTI. H183 is an active-site residue. The Cytoplasmic portion of the chain corresponds to 223-340; the sequence is SRTHYTIDVV…SSSSTYPLPC (118 aa). Active-site residues include H226 and D230. The disordered stretch occupies residues 294-313; it reads STPRGQERGGASAESSDSSV.

Belongs to the sphingomyelin synthase family.

The protein resides in the membrane. The catalysed reaction is an N-acyl-sphingoid base + a 1,2-diacyl-sn-glycero-3-phosphocholine = an N-(acyl)-sphingosylphosphocholine + a 1,2-diacyl-sn-glycerol. It catalyses the reaction an N-acylsphing-4-enine + a 1,2-diacyl-sn-glycero-3-phosphocholine = a sphingomyelin + a 1,2-diacyl-sn-glycerol. The enzyme catalyses an N-acyl-15-methylhexadecasphing-4-enine + a 1,2-diacyl-sn-glycero-3-phosphocholine = an N-acyl-15-methylhexadecasphing-4-enine-1-phosphocholine + a 1,2-diacyl-sn-glycerol. Its pathway is lipid metabolism; sphingolipid metabolism. In terms of biological role, bidirectional lipid cholinephosphotransferase capable of converting phosphatidylcholine (PC) and ceramide to sphingomyelin (SM) and diacylglycerol (DAG) and vice versa. Direction is dependent on the relative concentrations of DAG and ceramide as phosphocholine acceptors. Directly and specifically recognizes the choline head group on the substrate. Also requires two fatty chains on the choline-P donor molecule in order to be recognized efficiently as a substrate. Does not function strictly as a SM synthase. C.elegans contains specific sphingoid bases, which are unique or different in structure compared to the sphingoid bases found in other animals. Two examples of these distinctive compounds are: 15-methylhexadecasphinganine and 15-methylhexadecasphing-4-enine. The sequence is that of Putative phosphatidylcholine:ceramide cholinephosphotransferase 3 (sms-3) from Caenorhabditis elegans.